The chain runs to 1035 residues: Cell-division control histidine kinase PdhS (1035 aa).

The segment at 1–613 is important for polar localization; the sequence is MSGSYPFIDI…HADGSEEPVD (613 aa). The tract at residues 500-533 is disordered; that stretch reads QGLANTRAESETPVSETSSIEPVEPTPPVKTRSE. An interaction with DivK region spans residues 614–1035; sequence AHLNAIAWRG…VFPPTRVLAD (422 aa). The region spanning 659–730 is the PAS domain; that stretch reads HVEELKTILD…YLHGLSGNGV (72 aa). The Histidine kinase domain maps to 802–1031; sequence RISHEIRTPL…VVEIVFPPTR (230 aa). Residue His-805 is modified to Phosphohistidine; by autocatalysis.

In terms of assembly, interacts with DivK.

The protein resides in the cytoplasm. The catalysed reaction is ATP + protein L-histidine = ADP + protein N-phospho-L-histidine.. Its function is as follows. Functions as a polar differentiation marker. Essential protein that, by localizing in the old pole of dividing cells, controls cell division and maturation, probably through control of DivK phosphorylation status and cellular distribution, which in turn regulates CtrA, a transcriptional regulator of the minB operon. The asymmetrical localization of this protein is probably required for cells to enter a new division cycle. This chain is Cell-division control histidine kinase PdhS (pdhS), found in Brucella ovis (strain ATCC 25840 / 63/290 / NCTC 10512).